Consider the following 95-residue polypeptide: Large ribosomal subunit protein bL27 (95 aa).

Positions 1–6 (MFLQLF) are excised as a propeptide.

Belongs to the bacterial ribosomal protein bL27 family. Post-translationally, the N-terminus is cleaved by ribosomal processing cysteine protease Prp.

This is Large ribosomal subunit protein bL27 from Symbiobacterium thermophilum (strain DSM 24528 / JCM 14929 / IAM 14863 / T).